The sequence spans 356 residues: Serendipity locus protein beta (356 aa).

A C2H2-type 1; degenerate zinc finger spans residues 171–193 (IPCHICGEMFSSQEVLERHIKAD). C2H2-type zinc fingers lie at residues 201 to 223 (ATCN…MNLH), 229 to 251 (LECR…MEVH), 257 to 279 (YQCD…LMRH), 286 to 308 (LICE…LRTH), and 315 to 337 (YPCP…KRVH).

Binds chromatin; requires N-terminal regions to form protein-protein contacts, in addition to DNA specific recognition by the zinc fingers.

It localises to the nucleus. Binds to the consensus DNA sequence 5'-YCAGAGATGCGCA-3'. The chain is Serendipity locus protein beta (Sry-beta) from Drosophila melanogaster (Fruit fly).